The sequence spans 337 residues: Casein kinase I isoform alpha (337 aa).

The 269-residue stretch at 20-288 (YRVIRKIGSG…YLRQLFRILF (269 aa)) folds into the Protein kinase domain. ATP contacts are provided by residues 26 to 34 (IGSGSFGDI) and Lys-49. The Proton acceptor role is filled by Asp-139.

It belongs to the protein kinase superfamily. CK1 Ser/Thr protein kinase family. Casein kinase I subfamily. As to quaternary structure, interacts with cos. Mg(2+) is required as a cofactor. In terms of processing, phosphorylated. The dephosphorylated kinase is active in the cytoplasm while the active kinase in the nucleus is phosphorylated.

It localises to the cytoplasm. It is found in the nucleus. The enzyme catalyses L-seryl-[protein] + ATP = O-phospho-L-seryl-[protein] + ADP + H(+). The catalysed reaction is L-threonyl-[protein] + ATP = O-phospho-L-threonyl-[protein] + ADP + H(+). With respect to regulation, activity increases following DNA damage. Functionally, casein kinases are operationally defined by their preferential utilization of acidic proteins such as caseins as substrates. Can phosphorylate a large number of proteins. Negative regulator of wg signaling. Phosphorylates arm directly or indirectly and stimulates its degradation which prevents inappropriate wg signaling. Phosphorylates smo which promotes its accumulation at the cell surface and its signaling activity in response to hh. Together with dco, regulates proteolytic processing of ci by phosphorylating it, which promotes its binding to slmb, the F-box recognition component of the SCF(slmb) E3 ubiquitin-protein ligase required for ci processing. Inhibits condensin II interphase activity by promoting degradation of the Cap-H2 regulatory subunit and limiting the levels of chromatin-bound Cap-H2 which regulates interphase chromosome organization. The sequence is that of Casein kinase I isoform alpha (CkIalpha) from Drosophila melanogaster (Fruit fly).